The following is an 84-amino-acid chain: U1-theraphotoxin-Hs1a (84 aa).

Residues 1 to 22 form the signal peptide; it reads MKVTLIAILTCAAVLVLHTTAA. Residues 23–48 constitute a propeptide that is removed on maturation; the sequence is EELEESQLMEVGMPDTELAAVDEERL. Intrachain disulfides connect Cys51-Cys65, Cys55-Cys76, and Cys70-Cys81.

It belongs to the neurotoxin 12 (Hwtx-2) family. 02 (Hwtx-2) subfamily. Expressed by the venom gland.

It is found in the secreted. Its function is as follows. Blocks neuromuscular transmission. Acts cooperatively to potentiate the activity of huwentoxin-I. Paralyzes locusts and kills mice following intracerebroventricular injection. This chain is U1-theraphotoxin-Hs1a, found in Cyriopagopus schmidti (Chinese bird spider).